A 366-amino-acid polypeptide reads, in one-letter code: sn-glycerol-3-phosphate import ATP-binding protein UgpC (366 aa).

Positions 4 to 235 (VTLRNVRKTY…PASTFVASFI (232 aa)) constitute an ABC transporter domain. An ATP-binding site is contributed by 37 to 44 (GPSGCGKS).

Belongs to the ABC transporter superfamily. sn-glycerol-3-phosphate importer (TC 3.A.1.1.3) family. The complex is composed of two ATP-binding proteins (UgpC), two transmembrane proteins (UgpA and UgpE) and a solute-binding protein (UgpB).

It localises to the cell inner membrane. It catalyses the reaction sn-glycerol 3-phosphate(out) + ATP + H2O = sn-glycerol 3-phosphate(in) + ADP + phosphate + H(+). In terms of biological role, part of the ABC transporter complex UgpBAEC involved in sn-glycerol-3-phosphate (G3P) import. Responsible for energy coupling to the transport system. This Rhodopseudomonas palustris (strain BisB18) protein is sn-glycerol-3-phosphate import ATP-binding protein UgpC.